The sequence spans 87 residues: U15-lycotoxin-Ls1f (87 aa).

The N-terminal stretch at 1 to 20 is a signal peptide; sequence MNSKIFAVLLLLAFLSCVLS. One can recognise a WAP domain in the interval 21–66; the sequence is DQYCPKSSITACKKMNIRNDCCKDDDCTGGSWCCATPCGNFCKYPT. 5 cysteine pairs are disulfide-bonded: C24/C54, C32/C58, C41/C53, C42/C80, and C47/C62.

It belongs to the venom protein 11 family. 01 (wap-1) subfamily. In terms of processing, contains 5 disulfide bonds. In terms of tissue distribution, expressed by the venom gland.

The protein resides in the secreted. Functionally, has antibacterial activity. The chain is U15-lycotoxin-Ls1f from Lycosa singoriensis (Wolf spider).